The sequence spans 371 residues: uncharacterized protein (371 aa).

Residues 287 to 323 (EVVTALDRYRQHLRETRERLEEKQGKLLEELKGYESM) adopt a coiled-coil conformation.

This is an uncharacterized protein from Aspergillus fumigatus (strain ATCC MYA-4609 / CBS 101355 / FGSC A1100 / Af293) (Neosartorya fumigata).